A 930-amino-acid chain; its full sequence is Urea transporter 2 (930 aa).

The segment covering 1 to 11 (MSDHHPLKEMS) has biased composition (basic and acidic residues). A disordered region spans residues 1 to 90 (MSDHHPLKEM…KRRESEVSRR (90 aa)). Composition is skewed to low complexity over residues 12–25 (DSNS…PLSS) and 32–43 (SELSSPTWPSSS). Residues 56–89 (PEEKDLRSSDEDSHIVKIEKPNERNKRRESEVSR) show a composition bias toward basic and acidic residues. The next 8 helical transmembrane spans lie at 145 to 165 (ISGL…TIAG), 185 to 205 (AIAS…MAVF), 213 to 233 (WWLL…SSAL), 242 to 262 (LPVF…ATGH), 280 to 300 (NITW…VGVG), 311 to 331 (GGVI…HAAI), 350 to 372 (IYLG…MFYA), and 401 to 421 (VVGV…FLLL). The segment at 452 to 479 (SEEEKSPNGGSGEQSHGSGQWKAEESSE) is disordered. Serine 487 carries the post-translational modification Phosphoserine. 4 consecutive transmembrane segments (helical) span residues 610–630 (GILI…SGCL), 648–668 (AIAA…MAVF), 676–696 (WWLL…SSAL), and 705–725 (LPVF…ATGH). N-linked (GlcNAc...) asparagine glycosylation is present at asparagine 743. The next 4 helical transmembrane spans lie at 774 to 794 (GGIF…HAAI), 813 to 833 (IYFG…GGMF), 842 to 862 (LLAI…ANML), and 864 to 884 (VFGL…FLLL).

Belongs to the urea transporter family. As to expression, highly expressed in kidney medulla (at protein level). Also detected in testes, heart, brain and liver (at protein level). In the kidney, present in thin descending limbs of the loop of Henle and in the middle and terminal inner medullary collecting ducts. In terms of tissue distribution, expressed in the kidney medulla. Expressed in the peritubular myoid cells forming the outermost layer of the seminiferous tubules within the testes and is not detected in kidney. Expression levels are coordinated with the stage of testes development and increase 15 days postpartum, commensurate with the start of seminiferous tubule fluid movement.

Its subcellular location is the apical cell membrane. It localises to the basolateral cell membrane. The enzyme catalyses urea(in) = urea(out). Inhibited by phloretin. Activated by forskolin, 3-isobutyl-1-methylxanthine (IBMX) and cAMP. Its activity is regulated as follows. Inhibited by phloretin. With respect to regulation, inhibited by phloretin. Activated by forskolin, 3-isobutyl-1-methylxanthine (IBMX) and cAMP. Its function is as follows. Mediates the transport of urea driven by a concentration gradient across the cell membrane of the renal inner medullary collecting duct which is critical to the urinary concentrating mechanism. Functionally, mediates the transport of urea driven by a concentration gradient across the cell membrane. Implicated in the urea movement across the blood-testis barrier and does not translocate water. This is Urea transporter 2 (Slc14a2) from Mus musculus (Mouse).